The chain runs to 392 residues: Serine protease ea (392 aa).

Residues 1-19 (MLKPSIICLFLGILAKSSA) form the signal peptide. Residues 20-127 (GQFYFPNEAA…GQCGNILSNR (108 aa)) constitute a propeptide, activation peptide. The Clip domain occupies 36 to 89 (RCITPNRERALCIHLEDCKYLYGLLTTTPLRDTDRLYLSRSQCGYTNGKVLICC). Intrachain disulfides connect Cys-37–Cys-88, Cys-47–Cys-78, and Cys-53–Cys-89. Asn-107 carries N-linked (GlcNAc...) asparagine glycosylation. Cystine bridges form between Cys-120–Cys-260, Cys-158–Cys-174, Cys-202–Cys-212, Cys-307–Cys-324, and Cys-334–Cys-367. Residues 128-391 (IYGGMKTKID…YVDWIQNTIE (264 aa)) enclose the Peptidase S1 domain. Residue His-173 is the Charge relay system of the active site. Glu-193, Asp-195, Thr-198, and Asp-201 together coordinate Ca(2+). Asp-240 functions as the Charge relay system in the catalytic mechanism. Ser-338 functions as the Charge relay system in the catalytic mechanism.

The protein belongs to the peptidase S1 family. CLIP subfamily. In terms of assembly, interacts with Spn27A; the two proteins are covalently linked leading to inhibition of ea catalytic activity. Interacts (via Peptidase domain) with snk (via N-terminal prodomain); leads to proteolytic activation of ea by snk. Sulfation of a vitelline membrane component by pip is required for proteolytic cleavage of ea by snk but not for the interaction of ea with snk. Post-translationally, proteolytically cleaved by snk. Activation peptide and active catalytic domain remain associated by a disulfide bond. Processed ea/easter is present in extremely low amounts in the early embryo as it is rapidly converted into a high molecular mass complex made up of ea covalently bound to the serpin Spn27A. Zymogen activation is also controlled by a negative feedback loop from Dorsal.

It localises to the secreted. Its activity is regulated as follows. Activated proteolytically by snk; activation requires both activation of the ndl-gd-snk protease cascade and sulfation of a vitelline membrane component by pip. Inhibited by binding of the serpin Spn27A. Functionally, component of the extracellular signaling pathway that establishes the dorsal-ventral pathway of the embryo. A protease cascade involving ndl, gd, snk and ea results in activation of the spz Toll receptor ligand; acts downstream of ndl, gd and snk and is required for proteolytic processing of spz. Activation of ea requires both activation of the ndl-gd-snk protease cascade and sulfation of a vitelline membrane component by pip. Localized activation of the Toll receptor in the ventral region of the embryo defines cell identities along the dorsal-ventral continuum. The polypeptide is Serine protease ea (Drosophila melanogaster (Fruit fly)).